We begin with the raw amino-acid sequence, 83 residues long: uncharacterized protein (83 aa).

The next 3 helical transmembrane spans lie at 7-26, 36-58, and 65-82; these read FARF…IVSY, LSPL…ILPF, and ILTV…YLAF.

It is found in the cell membrane. This is an uncharacterized protein from Archaeoglobus fulgidus (strain ATCC 49558 / DSM 4304 / JCM 9628 / NBRC 100126 / VC-16).